The primary structure comprises 940 residues: MCCAIWSASRAPACSASQLSSSHAVRPSVVPDANPRAAPRYSPDLRIQCTSGTPRPCGSSPLAIVTSRETARATTPSAVPNGASVSNSPCATAASTGAGALDPPVRSSISNSRRGPTSGSVRGRPRCSSSVRSAAASACSRASACIGARCHTVTNEVAPPSSASATRIAPAVTGSGSPSADSCTAPPSSTADARAPRSADSAAVCGQPRRLTLCRCARPSASRASSQAAATPGSSNSGARGSGRSVITSHASRPLIASSPTVQRNQTTVHQQTCEGPTCVQRSVTRLTAMSNPSHAEVPSAYPPPADFAANANATGELYAEAEKDRLAFWEKQAKRLSWQTPFTDVLDWSDAPFAKWFVGGKINVAYNCVDRHVEAGNGDRVAIHWEGEPVGDARSITYAELKDEVCKAANALTDLGLVAGDRVAIYMPMIPEAIVAMLACARLGVMHSVVFAGFSASALRARIEDAEAKLVITSDGQYRRGKAASLKEAVDEAVADQPSVKNVLVVRRTGIDVKWTDGRDLWWDETVEQASTEHIPAAFDSEQPLFLLYTSGTTGKPKGIVHTSGGYLTQSSYTHWNVFDVKPESDVYWCTADIGWVTGHTYIVYGPLSNGVTQVVYEGTPTSPTEHRHFEVIEKYGVTIYYTAPTLIRTFMKLGHQIPASHDLSSLRLLGSVGEPINPEAWRWYREHIGGGKTPIVDTWWQTETGAIMISPLPGVTAAKPGSAMTPLPGISAKIVDDEGNQLVPGADEAEHVTGYLVLDQPWPAMLRGIWGDPQRFKDTYWSRFAEQGWYFAGDGARYDSDGHIWVLGRIDDVMNVSGHRISTAEVESALVGHAGVAEAAVVGASDDTTGQAICAFVILKASAHGGPENMIEELRAEVAREISPIAKPREIHIVPELPKTRSGKIMRRLLRDVAEGRELGDTSTLVDPSVFEAIRASK.

Positions 1 to 33 are cleaved as a signal peptide; that stretch reads MCCAIWSASRAPACSASQLSSSHAVRPSVVPDA. The unknown stretch occupies residues 1-289; the sequence is MCCAIWSASR…VQRSVTRLTA (289 aa). 3 disordered regions span residues 70 to 127, 157 to 202, and 224 to 274; these read TARA…RPRC, VAPP…ADSA, and ASSQ…QQTC. 2 stretches are compositionally biased toward polar residues: residues 72-95 and 107-120; these read RATTPSAVPNGASVSNSPCATAAS and SSISNSRRGPTSGS. 2 stretches are compositionally biased toward low complexity: residues 184–202 and 224–245; these read TAPPSSTADARAPRSADSA and ASSQAAATPGSSNSGARGSGRS. Polar residues predominate over residues 258-274; sequence SSPTVQRNQTTVHQQTC. The acetyl-coenzyme A synthetase stretch occupies residues 290–940; sequence MSNPSHAEVP…SVFEAIRASK (651 aa). CoA contacts are provided by residues 480–483 and Thr599; that span reads RRGK. ATP-binding positions include 675–677, 699–704, Asp796, and Arg811; these read GEP and DTWWQT. Ser819 is a CoA binding site. Arg822 provides a ligand contact to ATP. Mg(2+) is bound by residues Val833, His835, and Val838. Position 906 is an N6-acetyllysine (Lys906).

The protein belongs to the ATP-dependent AMP-binding enzyme family. Mg(2+) is required as a cofactor. Acetylated on Lys-906 by Pat in the presence of acetyl-CoA as an acetyl donor and ATP. Acetylation results in the inactivation of the enzyme. Deacetylation by the SIR2-homolog deacetylase CobB is required to activate the enzyme.

The catalysed reaction is acetate + ATP + CoA = acetyl-CoA + AMP + diphosphate. Catalyzes the conversion of acetate into acetyl-CoA (AcCoA), an essential intermediate at the junction of anabolic and catabolic pathways. AcsA undergoes a two-step reaction. In the first half reaction, AcsA combines acetate with ATP to form acetyl-adenylate (AcAMP) intermediate. In the second half reaction, it can then transfer the acetyl group from AcAMP to the sulfhydryl group of CoA, forming the product AcCoA. The protein is Acetyl-coenzyme A synthetase (acsA) of Mycolicibacterium smegmatis (strain ATCC 700084 / mc(2)155) (Mycobacterium smegmatis).